The primary structure comprises 621 residues: Nitrate reductase [NADH] 1 (621 aa).

The Cytochrome b5 heme-binding domain maps to 249–324 (GKEFTMSEVR…LDTYRIGELI (76 aa)). Residues His-284 and His-307 each contribute to the heme site. Residues 361 to 473 (REKIHCRLVG…KGPLGHVEYT (113 aa)) form the FAD-binding FR-type domain. FAD contacts are provided by residues 413–416 (RAYT), 430–432 (LVK), Phe-435, 447–449 (LMT), Ser-497, and Thr-500.

The protein belongs to the nitrate reductase family. Homodimer. FAD is required as a cofactor. The cofactor is heme. Mo-molybdopterin serves as cofactor.

The catalysed reaction is nitrite + NAD(+) + H2O = nitrate + NADH + H(+). Functionally, nitrate reductase is a key enzyme involved in the first step of nitrate assimilation in plants, fungi and bacteria. This chain is Nitrate reductase [NADH] 1, found in Zea mays (Maize).